The primary structure comprises 297 residues: tRNA pseudouridine synthase B (297 aa).

Residue Asp44 is the Nucleophile of the active site.

Belongs to the pseudouridine synthase TruB family. Type 1 subfamily.

The enzyme catalyses uridine(55) in tRNA = pseudouridine(55) in tRNA. In terms of biological role, responsible for synthesis of pseudouridine from uracil-55 in the psi GC loop of transfer RNAs. This chain is tRNA pseudouridine synthase B, found in Mycobacterium sp. (strain JLS).